Here is a 376-residue protein sequence, read N- to C-terminus: Nuclear egress protein 1 (376 aa).

The residue at position 19 (Ser19) is a Phosphoserine. A disordered region spans residues 22 to 57; it reads RKRRQRELASKVASTVNGATSANNHGEPPSPADARP. Positions 33–45 are enriched in polar residues; the sequence is VASTVNGATSANN. The CCCH-type zinc-finger motif lies at 106–211; sequence CLDISPYGNE…HVIFENSDVH (106 aa). The disordered stretch occupies residues 316–376; the sequence is VVSTNGCGPS…PLFLNSIRAP (61 aa). The segment covering 317 to 332 has biased composition (polar residues); the sequence is VSTNGCGPSSSSQSTP.

Belongs to the herpesviridae NEC1 protein family. In terms of assembly, forms a heterohexameric complex with NEC2. Interacts with capsid vertex specific component 2/CVC2; this interaction directs the capsid to the host inner nuclear membrane to initiate budding. In terms of processing, phosphorylated at serine residues in the N-terminus. This phosphorylation regulates the localization within the inner nuclear membrane. Phosphorylation by viral kinase UL97 at Ser-19 plays an important role for correct viral nuclear egress complex (NEC) localization.

It localises to the host nucleus inner membrane. Plays an essential role in virion nuclear egress, the first step of virion release from infected cell. Within the host nucleus, NEC1 interacts with the newly formed capsid through the vertexes and directs it to the inner nuclear membrane by associating with NEC2. Induces the budding of the capsid at the inner nuclear membrane as well as its envelopment into the perinuclear space. There, the NEC1/NEC2 complex promotes the fusion of the enveloped capsid with the outer nuclear membrane and the subsequent release of the viral capsid into the cytoplasm where it will reach the secondary budding sites in the host Golgi or trans-Golgi network. The polypeptide is Nuclear egress protein 1 (Homo sapiens (Human)).